We begin with the raw amino-acid sequence, 287 residues long: 4-hydroxybenzoate octaprenyltransferase (287 aa).

Transmembrane regions (helical) follow at residues 41 to 61 (WPLL…GCAM), 89 to 109 (WEAV…ILPL), 133 to 153 (FFAI…PMAF), 158 to 178 (DTVP…SVAY), 202 to 224 (FGRF…YVWI), and 266 to 286 (HNNW…LLAG).

This sequence belongs to the UbiA prenyltransferase family. Mg(2+) is required as a cofactor.

Its subcellular location is the cell inner membrane. The catalysed reaction is all-trans-octaprenyl diphosphate + 4-hydroxybenzoate = 4-hydroxy-3-(all-trans-octaprenyl)benzoate + diphosphate. The protein operates within cofactor biosynthesis; ubiquinone biosynthesis. In terms of biological role, catalyzes the prenylation of para-hydroxybenzoate (PHB) with an all-trans polyprenyl group. Mediates the second step in the final reaction sequence of ubiquinone-8 (UQ-8) biosynthesis, which is the condensation of the polyisoprenoid side chain with PHB, generating the first membrane-bound Q intermediate 3-octaprenyl-4-hydroxybenzoate. The chain is 4-hydroxybenzoate octaprenyltransferase from Burkholderia cenocepacia (strain HI2424).